A 734-amino-acid chain; its full sequence is Photosystem I P700 chlorophyll a apoprotein A2 (734 aa).

The next 8 membrane-spanning stretches (helical) occupy residues 46 to 69 (IFAS…FHVA), 135 to 158 (LYTG…LHLQ), 175 to 199 (LNHH…HVAI), 273 to 291 (IAHH…GHMY), 330 to 353 (LHFQ…QHMY), 369 to 395 (AALY…IFFV), 417 to 439 (AIIS…LYVH), and 517 to 535 (FLVH…LILV). [4Fe-4S] cluster is bound by residues Cys-559 and Cys-568. 2 helical membrane-spanning segments follow: residues 575-596 (AFYL…YWHW) and 643-665 (LSVW…MFLI). Positions 654, 662, and 670 each coordinate chlorophyll a. Trp-671 contacts phylloquinone. Residues 707–727 (LVGLAHFSVGYVLTYAAFLIA) form a helical membrane-spanning segment.

This sequence belongs to the PsaA/PsaB family. As to quaternary structure, the PsaA/B heterodimer binds the P700 chlorophyll special pair and subsequent electron acceptors. PSI consists of a core antenna complex that captures photons, and an electron transfer chain that converts photonic excitation into a charge separation. The eukaryotic PSI reaction center is composed of at least 11 subunits. Requires P700 is a chlorophyll a/chlorophyll a' dimer, A0 is one or more chlorophyll a, A1 is one or both phylloquinones and FX is a shared 4Fe-4S iron-sulfur center. as cofactor.

The protein localises to the plastid. Its subcellular location is the chloroplast thylakoid membrane. The enzyme catalyses reduced [plastocyanin] + hnu + oxidized [2Fe-2S]-[ferredoxin] = oxidized [plastocyanin] + reduced [2Fe-2S]-[ferredoxin]. PsaA and PsaB bind P700, the primary electron donor of photosystem I (PSI), as well as the electron acceptors A0, A1 and FX. PSI is a plastocyanin-ferredoxin oxidoreductase, converting photonic excitation into a charge separation, which transfers an electron from the donor P700 chlorophyll pair to the spectroscopically characterized acceptors A0, A1, FX, FA and FB in turn. Oxidized P700 is reduced on the lumenal side of the thylakoid membrane by plastocyanin. The chain is Photosystem I P700 chlorophyll a apoprotein A2 from Chlorokybus atmophyticus (Soil alga).